The following is a 712-amino-acid chain: Eukaryotic translation initiation factor 3 subunit B (712 aa).

The residue at position 1 (Met1) is an N-acetylmethionine. The region spanning 56 to 143 is the RRM domain; that stretch reads NIIVVDHLPV…HIFAVNMFDD (88 aa).

Belongs to the eIF-3 subunit B family. Component of the eukaryotic translation initiation factor 3 (eIF-3) complex, which is composed of at least 13 different subunits. Binds to the translation initiation factor TIF3H1.

It localises to the cytoplasm. In terms of biological role, RNA-binding component of the eukaryotic translation initiation factor 3 (eIF-3) complex, which is involved in protein synthesis of a specialized repertoire of mRNAs and, together with other initiation factors, stimulates binding of mRNA and methionyl-tRNAi to the 40S ribosome. The eIF-3 complex specifically targets and initiates translation of a subset of mRNAs involved in cell proliferation. The protein is Eukaryotic translation initiation factor 3 subunit B (TIF3B1) of Arabidopsis thaliana (Mouse-ear cress).